The following is a 266-amino-acid chain: Vitamin B12-binding protein (266 aa).

Residues 1–22 (MAKSLFRALVALSFLAPLWLNA) form the signal peptide. One can recognise a Fe/B12 periplasmic-binding domain in the interval 25 to 266 (RVITLSPANT…QLCNALSQVD (242 aa)). Cyanocob(III)alamin-binding positions include Tyr50 and 242–246 (DWFER). Cys183 and Cys259 are disulfide-bonded.

It belongs to the BtuF family. The complex is composed of two ATP-binding proteins (BtuD), two transmembrane proteins (BtuC) and a solute-binding protein (BtuF).

It is found in the periplasm. Its function is as follows. Part of the ABC transporter complex BtuCDF involved in vitamin B12 import. Binds vitamin B12 and delivers it to the periplasmic surface of BtuC. This Escherichia coli (strain K12) protein is Vitamin B12-binding protein (btuF).